A 194-amino-acid chain; its full sequence is Translation machinery-associated protein 22 (194 aa).

The 72-residue stretch at 102–173 folds into the SUI1 domain; the sequence is VQIKRVERNK…DVKEWLLELY (72 aa).

Belongs to the DENR family. Interacts with the 40S ribosomal subunit.

It is found in the cytoplasm. This is Translation machinery-associated protein 22 (tma22) from Aspergillus fumigatus (strain ATCC MYA-4609 / CBS 101355 / FGSC A1100 / Af293) (Neosartorya fumigata).